Here is a 317-residue protein sequence, read N- to C-terminus: Malate dehydrogenase (317 aa).

Residues 10 to 15 (GGGQIG) and D34 contribute to the NAD(+) site. The substrate site is built by R83 and R89. NAD(+)-binding positions include N96 and 119–121 (ISN). Positions 121 and 152 each coordinate substrate. H176 serves as the catalytic Proton acceptor.

It belongs to the LDH/MDH superfamily. MDH type 3 family.

The catalysed reaction is (S)-malate + NAD(+) = oxaloacetate + NADH + H(+). Its function is as follows. Catalyzes the reversible oxidation of malate to oxaloacetate. This is Malate dehydrogenase from Citrifermentans bemidjiense (strain ATCC BAA-1014 / DSM 16622 / JCM 12645 / Bem) (Geobacter bemidjiensis).